Here is a 245-residue protein sequence, read N- to C-terminus: Pyridoxine 5'-phosphate synthase (245 aa).

Positions 8 and 19 each coordinate 3-amino-2-oxopropyl phosphate. The active-site Proton acceptor is the histidine 44. 1-deoxy-D-xylulose 5-phosphate is bound by residues arginine 46 and histidine 51. Glutamate 76 serves as the catalytic Proton acceptor. Threonine 106 provides a ligand contact to 1-deoxy-D-xylulose 5-phosphate. Residue histidine 198 is the Proton donor of the active site. Residues aspartate 199 and 221–222 (GH) contribute to the 3-amino-2-oxopropyl phosphate site.

Belongs to the PNP synthase family. As to quaternary structure, homooctamer; tetramer of dimers.

The protein localises to the cytoplasm. It carries out the reaction 3-amino-2-oxopropyl phosphate + 1-deoxy-D-xylulose 5-phosphate = pyridoxine 5'-phosphate + phosphate + 2 H2O + H(+). Its pathway is cofactor biosynthesis; pyridoxine 5'-phosphate biosynthesis; pyridoxine 5'-phosphate from D-erythrose 4-phosphate: step 5/5. Functionally, catalyzes the complicated ring closure reaction between the two acyclic compounds 1-deoxy-D-xylulose-5-phosphate (DXP) and 3-amino-2-oxopropyl phosphate (1-amino-acetone-3-phosphate or AAP) to form pyridoxine 5'-phosphate (PNP) and inorganic phosphate. This Brucella anthropi (strain ATCC 49188 / DSM 6882 / CCUG 24695 / JCM 21032 / LMG 3331 / NBRC 15819 / NCTC 12168 / Alc 37) (Ochrobactrum anthropi) protein is Pyridoxine 5'-phosphate synthase.